The chain runs to 130 residues: Small ribosomal subunit protein uS9 (130 aa).

The disordered stretch occupies residues 98–130 (LKRAGLLTRDPRMKERKKPGLKKARRSPQFSKR). The segment covering 111–130 (KERKKPGLKKARRSPQFSKR) has biased composition (basic residues).

It belongs to the universal ribosomal protein uS9 family.

This Staphylococcus saprophyticus subsp. saprophyticus (strain ATCC 15305 / DSM 20229 / NCIMB 8711 / NCTC 7292 / S-41) protein is Small ribosomal subunit protein uS9.